Here is a 352-residue protein sequence, read N- to C-terminus: Keratocan (352 aa).

The signal sequence occupies residues Met1–Thr20. The region spanning Glu33 to Ser71 is the LRRNT domain. 2 disulfide bridges follow: Cys42–Cys48 and Cys46–Cys58. 8 LRR repeats span residues Arg72–Asn93, Gln96–Leu117, Lys122–Arg142, Ser143–Asn164, Asn167–Asp180, Asn193–Asn214, Thr215–Val235, and Lys238–Gly258. Asn93 is a glycosylation site (N-linked (GlcNAc...) (keratan sulfate) asparagine). Asn167 carries N-linked (GlcNAc...) (keratan sulfate) asparagine glycosylation. Residue Asn222 is glycosylated (N-linked (GlcNAc...) asparagine). Asn260 carries an N-linked (GlcNAc...) (keratan sulfate) asparagine glycan. LRR repeat units lie at residues Ser263–Ala282 and His283–Pro304. Asn298 carries an N-linked (GlcNAc...) asparagine glycan. An intrachain disulfide couples Cys303 to Cys343.

Belongs to the small leucine-rich proteoglycan (SLRP) family. SLRP class II subfamily. Binds three long, highly sulfated keratan sulfate chains in the cornea but short, non-sulfated poly(N-acetyllactosamine) chains in other tissues. Post-translationally, the N-terminus is blocked. In terms of tissue distribution, abundant in cornea and sclera but also found in other tissues.

It is found in the secreted. The protein resides in the extracellular space. It localises to the extracellular matrix. May be important in developing and maintaining corneal transparency and for the structure of the stromal matrix. In Bos taurus (Bovine), this protein is Keratocan (KERA).